The sequence spans 212 residues: Phosphoribosylglycinamide formyltransferase (212 aa).

Residue 11–13 (GSN) participates in N(1)-(5-phospho-beta-D-ribosyl)glycinamide binding. Residues arginine 64, 89-92 (MRIL), and asparagine 106 each bind (6R)-10-formyltetrahydrofolate. The active-site Proton donor is histidine 108. 140 to 144 (TDELD) provides a ligand contact to (6R)-10-formyltetrahydrofolate. 170 to 173 (QTQE) serves as a coordination point for N(1)-(5-phospho-beta-D-ribosyl)glycinamide.

The protein belongs to the GART family. As to quaternary structure, monomer. Homodimer below pH 6.8.

It catalyses the reaction N(1)-(5-phospho-beta-D-ribosyl)glycinamide + (6R)-10-formyltetrahydrofolate = N(2)-formyl-N(1)-(5-phospho-beta-D-ribosyl)glycinamide + (6S)-5,6,7,8-tetrahydrofolate + H(+). Its pathway is purine metabolism; IMP biosynthesis via de novo pathway; N(2)-formyl-N(1)-(5-phospho-D-ribosyl)glycinamide from N(1)-(5-phospho-D-ribosyl)glycinamide (10-formyl THF route): step 1/1. Its activity is regulated as follows. Inhibited by N10-(bromoacetyl)-5,8-dideazafolate. In terms of biological role, catalyzes the transfer of a formyl group from 10-formyltetrahydrofolate to 5-phospho-ribosyl-glycinamide (GAR), producing 5-phospho-ribosyl-N-formylglycinamide (FGAR) and tetrahydrofolate. The sequence is that of Phosphoribosylglycinamide formyltransferase from Escherichia coli (strain K12).